The following is a 237-amino-acid chain: Flagellar brake protein YcgR (237 aa).

A PilZ domain is found at 108-225 (QRRRQFRVTT…MERKIQSAVF (118 aa)).

It belongs to the YcgR family. In terms of assembly, monomer. Interacts with the flagellar basal bodies.

It localises to the bacterial flagellum basal body. In terms of biological role, acts as a flagellar brake, regulating swimming and swarming in a bis-(3'-5') cyclic diguanylic acid (c-di-GMP)-dependent manner. Binds 1 c-di-GMP dimer per subunit. Increasing levels of c-di-GMP lead to decreased motility. This chain is Flagellar brake protein YcgR, found in Serratia proteamaculans (strain 568).